The primary structure comprises 118 residues: Large ribosomal subunit protein bL20 (118 aa).

This sequence belongs to the bacterial ribosomal protein bL20 family.

Functionally, binds directly to 23S ribosomal RNA and is necessary for the in vitro assembly process of the 50S ribosomal subunit. It is not involved in the protein synthesizing functions of that subunit. This Staphylococcus epidermidis (strain ATCC 35984 / DSM 28319 / BCRC 17069 / CCUG 31568 / BM 3577 / RP62A) protein is Large ribosomal subunit protein bL20.